The following is a 101-amino-acid chain: Small ribosomal subunit protein uS14 (101 aa).

It belongs to the universal ribosomal protein uS14 family. As to quaternary structure, part of the 30S ribosomal subunit. Contacts proteins S3 and S10.

Binds 16S rRNA, required for the assembly of 30S particles and may also be responsible for determining the conformation of the 16S rRNA at the A site. The polypeptide is Small ribosomal subunit protein uS14 (Hahella chejuensis (strain KCTC 2396)).